A 217-amino-acid chain; its full sequence is Oxygen-insensitive NAD(P)H nitroreductase (217 aa).

10 to 14 (RYSTK) lines the FMN pocket. NAD(+) contacts are provided by Lys-14, Thr-41, Asn-71, Lys-74, and Arg-107. Residue Asn-71 coordinates FMN. Residues 165–166 (EG) and 205–207 (KSR) each bind FMN.

This sequence belongs to the nitroreductase family. Homodimer. FMN serves as cofactor.

Reduction of a variety of nitroaromatic compounds using NADH (and to lesser extent NADPH) as source of reducing equivalents; two electrons are transferred. Capable of reducing nitrofurazone. The chain is Oxygen-insensitive NAD(P)H nitroreductase from Salmonella typhimurium (strain LT2 / SGSC1412 / ATCC 700720).